The chain runs to 573 residues: Proline--tRNA ligase (573 aa).

Belongs to the class-II aminoacyl-tRNA synthetase family. ProS type 1 subfamily. As to quaternary structure, homodimer.

The protein resides in the cytoplasm. The catalysed reaction is tRNA(Pro) + L-proline + ATP = L-prolyl-tRNA(Pro) + AMP + diphosphate. Catalyzes the attachment of proline to tRNA(Pro) in a two-step reaction: proline is first activated by ATP to form Pro-AMP and then transferred to the acceptor end of tRNA(Pro). As ProRS can inadvertently accommodate and process non-cognate amino acids such as alanine and cysteine, to avoid such errors it has two additional distinct editing activities against alanine. One activity is designated as 'pretransfer' editing and involves the tRNA(Pro)-independent hydrolysis of activated Ala-AMP. The other activity is designated 'posttransfer' editing and involves deacylation of mischarged Ala-tRNA(Pro). The misacylated Cys-tRNA(Pro) is not edited by ProRS. The sequence is that of Proline--tRNA ligase from Chromohalobacter salexigens (strain ATCC BAA-138 / DSM 3043 / CIP 106854 / NCIMB 13768 / 1H11).